Consider the following 74-residue polypeptide: Protein F9 homolog (74 aa).

Topologically, residues 1 to 34 (GHAAANCALARVATALTRRVPASRHGLAEGGTPP) are virion surface. A helical transmembrane segment spans residues 35–55 (WTLLLAVAAVAVLGVVAISLL). Residues 56–73 (RRALRIRFRYSKSIQTLR) are Intravirion-facing.

It belongs to the chordopoxvirinae L1 protein family.

It is found in the virion membrane. This is Protein F9 homolog from Capra hircus (Goat).